The primary structure comprises 367 residues: Nociceptin receptor (367 aa).

Residues 1 to 45 (MESLFPAPYWEVLYGSHFQGNLSLLNETVPHHLLLNASHSAFLPL) lie on the Extracellular side of the membrane. Asparagine 21, asparagine 26, and asparagine 36 each carry an N-linked (GlcNAc...) asparagine glycan. A helical transmembrane segment spans residues 46 to 71 (GLKVTIVGLYLAVCIGGLLGNCLVMY). Topologically, residues 72–84 (VILRHTKMKTATN) are cytoplasmic. Residues 85-106 (IYIFNLALADTLVLLTLPFQGT) form a helical membrane-spanning segment. At 107–121 (DILLGFWPFGNALCK) the chain is on the extracellular side. Cysteine 120 and cysteine 197 are joined by a disulfide. Residues 122-143 (TVIAIDYYNMFTSTFTLTAMSV) traverse the membrane as a helical segment. At 144 to 162 (DRYVAICHPIRALDVRTSS) the chain is on the cytoplasmic side. A helical membrane pass occupies residues 163-185 (KAQAVNVAIWALASVVGVPVAIM). Over 186 to 208 (GSAQVEDEEIECLVEIPAPQDYW) the chain is Extracellular. Residues 209 to 233 (GPVFAICIFLFSFIIPVLIISVCYS) form a helical membrane-spanning segment. Over 234–261 (LMIRRLRGVRLLSGSREKDRNLRRITRL) the chain is Cytoplasmic. A helical transmembrane segment spans residues 262 to 282 (VLVVVAVFVGCWTPVQVFVLV). Topologically, residues 283 to 297 (QGLGVQPGSETAVAI) are extracellular. Residues 298-319 (LRFCTALGYVNSCLNPILYAFL) traverse the membrane as a helical segment. Topologically, residues 320–367 (DENFKACFRKFCCASSLHREMQVSDRVRSIAKDVGLGCKTSETVPRPA) are cytoplasmic. The S-palmitoyl cysteine moiety is linked to residue cysteine 331.

It belongs to the G-protein coupled receptor 1 family. Post-translationally, phosphorylation at Ser-360 requires GRK3. Highly expressed in several brain areas, the intestine, liver and spleen. Detected in sympathetic stellate ganglion neurons.

It localises to the cell membrane. The protein resides in the cytoplasmic vesicle. Its function is as follows. G-protein coupled opioid receptor that functions as a receptor for the endogenous neuropeptide nociceptin. Ligand binding causes a conformation change that triggers signaling via guanine nucleotide-binding proteins (G proteins) and modulates the activity of down-stream effectors. Signaling via G proteins mediates inhibition of adenylate cyclase activity and calcium channel activity. Arrestins modulate signaling via G proteins and mediate the activation of alternative signaling pathways that lead to the activation of MAP kinases. Plays a role in modulating nociception and the perception of pain. Plays a role in the regulation of locomotor activity by the neuropeptide nociceptin. The protein is Nociceptin receptor (Oprl1) of Rattus norvegicus (Rat).